A 145-amino-acid polypeptide reads, in one-letter code: Protein SprT-like (145 aa).

The SprT-like domain occupies 4-140 (TNYVQEVSLA…VCGNCHGKLM (137 aa)). H64 is a Zn(2+) binding site. Residue E65 is part of the active site. A Zn(2+)-binding site is contributed by H68.

The protein belongs to the SprT family. Zn(2+) is required as a cofactor.

Its subcellular location is the cytoplasm. This is Protein SprT-like from Streptococcus pyogenes serotype M1.